Consider the following 222-residue polypeptide: Germin-like protein subfamily 1 member 5 (222 aa).

The signal sequence occupies residues 1-24 (MKGLLHFLLAKIILLALASSFVYC). The cysteines at positions 34 and 50 are disulfide-linked. Residues Asn38 and Asn71 are each glycosylated (N-linked (GlcNAc...) asparagine). A Cupin type-1 domain is found at 64–215 (SGLNVPGNTS…AFALDFNKVK (152 aa)). Mn(2+) is bound by residues His112, His114, and Glu119. N-linked (GlcNAc...) asparagine glycosylation is present at Asn139. A Mn(2+)-binding site is contributed by His163.

This sequence belongs to the germin family. As to quaternary structure, oligomer (believed to be a pentamer but probably hexamer).

The protein resides in the secreted. The protein localises to the extracellular space. It is found in the apoplast. In terms of biological role, may play a role in plant defense. Probably has no oxalate oxidase activity even if the active site is conserved. The sequence is that of Germin-like protein subfamily 1 member 5 from Arabidopsis thaliana (Mouse-ear cress).